Reading from the N-terminus, the 300-residue chain is uncharacterized protein (300 aa).

The first 19 residues, 1 to 19 (MKLKLLLIPLLGSSLLLSA), serve as a signal peptide directing secretion. C20 carries N-palmitoyl cysteine lipidation. C20 carries S-diacylglycerol cysteine lipidation.

The protein belongs to the MG439/MG440 family.

The protein localises to the cell membrane. This is an uncharacterized protein from Mycoplasma pneumoniae (strain ATCC 29342 / M129 / Subtype 1) (Mycoplasmoides pneumoniae).